The primary structure comprises 142 residues: Putative pre-16S rRNA nuclease (142 aa).

It belongs to the YqgF nuclease family.

Its subcellular location is the cytoplasm. Functionally, could be a nuclease involved in processing of the 5'-end of pre-16S rRNA. The chain is Putative pre-16S rRNA nuclease from Staphylococcus aureus (strain JH1).